Reading from the N-terminus, the 611-residue chain is UvrABC system protein C (611 aa).

The GIY-YIG domain occupies 19 to 97; sequence QRPGVYRMVD…IKELRPRYNV (79 aa). A UVR domain is found at 207–242; the sequence is NQVIEELGARMEAASERLEFEAAAQYRDRIQALQAV.

The protein belongs to the UvrC family. Interacts with UvrB in an incision complex.

It is found in the cytoplasm. Its function is as follows. The UvrABC repair system catalyzes the recognition and processing of DNA lesions. UvrC both incises the 5' and 3' sides of the lesion. The N-terminal half is responsible for the 3' incision and the C-terminal half is responsible for the 5' incision. The chain is UvrABC system protein C from Alkalilimnicola ehrlichii (strain ATCC BAA-1101 / DSM 17681 / MLHE-1).